Consider the following 864-residue polypeptide: Paramyosin (864 aa).

The tract at residues 1 to 30 (MSSLYRDLDSDVSSTRIVRHSYNVYRGSSP) is nonhelical region. The stretch at 31-853 (SSQNRLESRI…QTVRRSRSMS (823 aa)) forms a coiled coil. Residues 854-864 (VSREVTRVVRV) are nonhelical region.

Belongs to the paramyosin family. Homodimer. In terms of processing, phosphorylated. Most abundantly expressed in muscle tissues from byssus retractor and adductor muscles. Low expression in foot, gill, inner mantle and outer mantle.

The protein resides in the cytoplasm. The protein localises to the myofibril. Paramyosin is a major structural component of many thick filaments isolated from invertebrate muscles. The protein is Paramyosin of Mytilus galloprovincialis (Mediterranean mussel).